The primary structure comprises 715 residues: Polyribonucleotide nucleotidyltransferase (715 aa).

D488 and D494 together coordinate Mg(2+). A KH domain is found at 555–614; sequence PKIETIKIPVDKIREVIGSGGKVIREIVEKTGAKIDIGEDGTIKIAAAEQTKIDAAKEWI. An S1 motif domain is found at 624-692; sequence GQIYTGKVVK…DRGKTRLSMK (69 aa). Residues 692 to 715 are disordered; the sequence is KVVDQETGEDLSKSNEKAEEPADA. Over residues 701–715 the composition is skewed to basic and acidic residues; that stretch reads DLSKSNEKAEEPADA.

This sequence belongs to the polyribonucleotide nucleotidyltransferase family. Requires Mg(2+) as cofactor.

The protein resides in the cytoplasm. The catalysed reaction is RNA(n+1) + phosphate = RNA(n) + a ribonucleoside 5'-diphosphate. In terms of biological role, involved in mRNA degradation. Catalyzes the phosphorolysis of single-stranded polyribonucleotides processively in the 3'- to 5'-direction. In Phenylobacterium zucineum (strain HLK1), this protein is Polyribonucleotide nucleotidyltransferase.